Here is a 457-residue protein sequence, read N- to C-terminus: Argininosuccinate lyase (457 aa).

It belongs to the lyase 1 family. Argininosuccinate lyase subfamily.

The protein localises to the cytoplasm. The enzyme catalyses 2-(N(omega)-L-arginino)succinate = fumarate + L-arginine. Its pathway is amino-acid biosynthesis; L-arginine biosynthesis; L-arginine from L-ornithine and carbamoyl phosphate: step 3/3. The sequence is that of Argininosuccinate lyase from Escherichia coli O7:K1 (strain IAI39 / ExPEC).